A 104-amino-acid chain; its full sequence is Large ribosomal subunit protein bL21 (104 aa).

Belongs to the bacterial ribosomal protein bL21 family. In terms of assembly, part of the 50S ribosomal subunit. Contacts protein L20.

Functionally, this protein binds to 23S rRNA in the presence of protein L20. The polypeptide is Large ribosomal subunit protein bL21 (Alkalilimnicola ehrlichii (strain ATCC BAA-1101 / DSM 17681 / MLHE-1)).